The following is a 361-amino-acid chain: MAGNTIGQLFRVTTFGESHGLALGCIVDGVPPGIPLTEADLQHDLDRRRPGTSRYTTQRREPDQVKILSGVFEGVTTGTSIGLLIENTDQRSQDYSAIKDVFRPGHADYTYEQKYGLRDYRGGGRSSARETAMRVAAGAIAKKYLSEKFGIEIRGCLTQMGDIPLEIKDWSLVEQNPFFCPDPDKIDALDELMRALKKEGDSIGAKVTVVASGVPAGLGEPVFDRLDADIAHALMSINAVKGVEIGDGFDVVALRGSQNRDEITKDGFQSNHAGGIFGGISSGQQIIAHMALKPTSSITVPGRTINRFGEEVEMITKGRHDPCVGIRAVPIAEAMLAIVLMDHLLRQRAQNADVKTDIPRW.

NADP(+) contacts are provided by R48 and R54. FMN is bound by residues 125–127 (RSS), 238–239 (NA), G278, 293–297 (KPTSS), and R319.

This sequence belongs to the chorismate synthase family. In terms of assembly, homotetramer. It depends on FMNH2 as a cofactor.

It carries out the reaction 5-O-(1-carboxyvinyl)-3-phosphoshikimate = chorismate + phosphate. It functions in the pathway metabolic intermediate biosynthesis; chorismate biosynthesis; chorismate from D-erythrose 4-phosphate and phosphoenolpyruvate: step 7/7. Its function is as follows. Catalyzes the anti-1,4-elimination of the C-3 phosphate and the C-6 proR hydrogen from 5-enolpyruvylshikimate-3-phosphate (EPSP) to yield chorismate, which is the branch point compound that serves as the starting substrate for the three terminal pathways of aromatic amino acid biosynthesis. This reaction introduces a second double bond into the aromatic ring system. In Shigella flexneri serotype 5b (strain 8401), this protein is Chorismate synthase.